Here is a 413-residue protein sequence, read N- to C-terminus: Elongation factor 1-alpha (413 aa).

A tr-type G domain is found at 5-211 (KTHMNLAFIG…DALDEPDKPV (207 aa)). Residues 14-21 (GHVDHGKS) are G1. 14-21 (GHVDHGKS) serves as a coordination point for GTP. A Mg(2+)-binding site is contributed by Ser21. The tract at residues 60 to 64 (GVTID) is G2. The G3 stretch occupies residues 81-84 (DCPG). GTP-binding positions include 81–85 (DCPGH) and 136–139 (NKMD). Residues 136–139 (NKMD) are G4. The interval 175 to 177 (SAF) is G5.

The protein belongs to the TRAFAC class translation factor GTPase superfamily. Classic translation factor GTPase family. EF-Tu/EF-1A subfamily.

The protein resides in the cytoplasm. The enzyme catalyses GTP + H2O = GDP + phosphate + H(+). Its function is as follows. GTP hydrolase that promotes the GTP-dependent binding of aminoacyl-tRNA to the A-site of ribosomes during protein biosynthesis. This chain is Elongation factor 1-alpha, found in Methanosphaera stadtmanae (strain ATCC 43021 / DSM 3091 / JCM 11832 / MCB-3).